A 477-amino-acid polypeptide reads, in one-letter code: Inositol phosphosphingolipids phospholipase C (477 aa).

Residues methionine 1–histidine 398 lie on the Cytoplasmic side of the membrane. Glutamate 100 serves as a coordination point for Mg(2+). The active-site Proton acceptor is the histidine 334. A helical transmembrane segment spans residues phenylalanine 399 to alanine 417. The Mitochondrial intermembrane portion of the chain corresponds to asparagine 418–serine 424. A helical membrane pass occupies residues isoleucine 425–glycine 449. The Cytoplasmic segment spans residues arginine 450–lysine 477.

Belongs to the neutral sphingomyelinase family. Requires Mg(2+) as cofactor.

The protein resides in the endoplasmic reticulum membrane. Its subcellular location is the mitochondrion outer membrane. It carries out the reaction an N-acyl-(4R)-4-hydroxysphinganine-1-phosphoinositol + H2O = 1D-myo-inositol 1-phosphate + an N-acyl-(4R)-4-hydroxysphinganine + H(+). It catalyses the reaction a mannosylinositol-1-phospho-N-acyl-sphingoid base + H2O = mannosylinositol-1-phosphate + an N-acyl-sphingoid base + H(+). The enzyme catalyses an inositol phosphomannosylinositol-1-phospho-N-acyl-(4R)-4-hydroxysphinganine + H2O = mannosyldiinositol-1-phosphate + an N-acyl-(4R)-4-hydroxysphinganine + H(+). Its pathway is lipid metabolism; sphingolipid metabolism. Its activity is regulated as follows. Activated through localization to mitochondria in specific growth phases. Responsible for the hydrolysis of the phosphosphingolipids (IPS), inositol phosphorylceramide (IPC), mannosylinositol phosphorylceramide (MIPC), and mannosyldiinositol phosphorylceramide (M(IP)2C). Regulates sphingolipid metabolism in mitochondria, especially the formation of alpha-hydroxylated very long chain phytoceramides. The generated ceramides contribute to the normal function of mitochondria. Also active on sphingomyelin (SM), but this activity is probably not physiologically relevant. In Saccharomyces cerevisiae (strain ATCC 204508 / S288c) (Baker's yeast), this protein is Inositol phosphosphingolipids phospholipase C.